The chain runs to 29 residues: Cyclotide mech-3 (29 aa).

The cyclopeptide (Gly-Asn) cross-link spans 1–29 (GLPTCGETCTLGKCNTPKCTCNWPICYKN). Cystine bridges form between C5–C19, C9–C21, and C14–C26.

Post-translationally, this is a cyclic peptide. Contains 3 disulfide bonds.

Probably participates in a plant defense mechanism (Potential). Binds to and induces leakage in phospholipd membranes, particularly ones containing 1-palmitoyl-2-oleophosphatidylethanolamine (POPE). In vitro, displays cytotoxicity against cultured cells but no hemolytic activity towards fresh erythrocytes. This Melicytus chathamicus (Chatham Island mahoe) protein is Cyclotide mech-3.